A 215-amino-acid chain; its full sequence is uncharacterized protein (215 aa).

Catalysis depends on charge relay system residues Ser114, Asp162, and His194.

The protein belongs to the AB hydrolase superfamily. AB hydrolase 2 family.

This is an uncharacterized protein from Rickettsia typhi (strain ATCC VR-144 / Wilmington).